Here is a 134-residue protein sequence, read N- to C-terminus: Transcription antitermination protein NusB (134 aa).

Belongs to the NusB family.

In terms of biological role, involved in transcription antitermination. Required for transcription of ribosomal RNA (rRNA) genes. Binds specifically to the boxA antiterminator sequence of the ribosomal RNA (rrn) operons. The sequence is that of Transcription antitermination protein NusB from Halothermothrix orenii (strain H 168 / OCM 544 / DSM 9562).